A 319-amino-acid polypeptide reads, in one-letter code: Cytochrome f (319 aa).

The signal sequence occupies residues 1 to 34; it reads MQNRNTYDLKKKMTRLISVLVMIHIITRTSISNA. 4 residues coordinate heme: Y35, C55, C58, and H59. The chain crosses the membrane as a helical span at residues 285–304; that stretch reads VKGLLLFLASVILAQIFLVL.

It belongs to the cytochrome f family. The 4 large subunits of the cytochrome b6-f complex are cytochrome b6, subunit IV (17 kDa polypeptide, petD), cytochrome f and the Rieske protein, while the 4 small subunits are PetG, PetL, PetM and PetN. The complex functions as a dimer. The cofactor is heme.

Its subcellular location is the plastid. The protein localises to the chloroplast thylakoid membrane. Functionally, component of the cytochrome b6-f complex, which mediates electron transfer between photosystem II (PSII) and photosystem I (PSI), cyclic electron flow around PSI, and state transitions. This chain is Cytochrome f (petA), found in Picea abies (Norway spruce).